A 290-amino-acid polypeptide reads, in one-letter code: MDIEAYLERIGYKKSRNKLDLETLTDILQHQIRAVPFENLNIHCGDAMDLGLEAIFDQVVRRNRGGWCLQVNHLLYWALTTIGFETTMLGGYVYSTPAKKYSTGMIHLLLQVTIDGRNYIVDAGFGRSYQMWQPLELISGKDQPQVPCVFRLTEENGFWYLDQIRREQYIPNEEFLHSDLLEDSKYRKIYSFTLKPRTIEDFESMNTYLQTSPSSVFTSKSFCSLQTPDGVHCLVGFTLTHRRFNYKDNTDLIEFKTLSEEEIEKVLKNIFNISLQRKLVPKHGDRFFTI.

Met1 carries the N-acetylmethionine modification. Residue Cys68 is the Acyl-thioester intermediate of the active site. CoA is bound by residues Thr103 and Gly104. Position 106-107 (Ile106–His107) interacts with substrate. Residues His107 and Asp122 contribute to the active site. Tyr208 and Ser214 together coordinate CoA.

Belongs to the arylamine N-acetyltransferase family.

It localises to the cytoplasm. The enzyme catalyses an arylamine + acetyl-CoA = an N-acetylarylamine + CoA. In terms of biological role, participates in the detoxification of a plethora of hydrazine and arylamine drugs. Catalyzes the N- or O-acetylation of various arylamine and heterocyclic amine substrates and is able to bioactivate several known carcinogens. This is Arylamine N-acetyltransferase 1 (NAT1) from Homo sapiens (Human).